We begin with the raw amino-acid sequence, 608 residues long: Isocitrate dehydrogenase kinase/phosphatase (608 aa).

Residues 328 to 334 (APGIKGL) and Lys349 contribute to the ATP site. Asp384 is an active-site residue.

This sequence belongs to the AceK family.

The protein localises to the cytoplasm. The enzyme catalyses L-seryl-[isocitrate dehydrogenase] + ATP = O-phospho-L-seryl-[isocitrate dehydrogenase] + ADP + H(+). Bifunctional enzyme which can phosphorylate or dephosphorylate isocitrate dehydrogenase (IDH) on a specific serine residue. This is a regulatory mechanism which enables bacteria to bypass the Krebs cycle via the glyoxylate shunt in response to the source of carbon. When bacteria are grown on glucose, IDH is fully active and unphosphorylated, but when grown on acetate or ethanol, the activity of IDH declines drastically concomitant with its phosphorylation. The sequence is that of Isocitrate dehydrogenase kinase/phosphatase from Cupriavidus pinatubonensis (strain JMP 134 / LMG 1197) (Cupriavidus necator (strain JMP 134)).